Reading from the N-terminus, the 366-residue chain is Eukaryotic translation initiation factor 3 subunit H (366 aa).

The MPN domain occupies 12–161 (VKVEALVVMK…LRAFRLSPKF (150 aa)).

It belongs to the eIF-3 subunit H family. Component of the eukaryotic translation initiation factor 3 (eIF-3) complex.

The protein resides in the cytoplasm. In terms of biological role, component of the eukaryotic translation initiation factor 3 (eIF-3) complex, which is involved in protein synthesis of a specialized repertoire of mRNAs and, together with other initiation factors, stimulates binding of mRNA and methionyl-tRNAi to the 40S ribosome. The eIF-3 complex specifically targets and initiates translation of a subset of mRNAs involved in cell proliferation. This Emericella nidulans (strain FGSC A4 / ATCC 38163 / CBS 112.46 / NRRL 194 / M139) (Aspergillus nidulans) protein is Eukaryotic translation initiation factor 3 subunit H.